The chain runs to 245 residues: 1-(5-phosphoribosyl)-5-[(5-phosphoribosylamino)methylideneamino] imidazole-4-carboxamide isomerase (245 aa).

D11 serves as the catalytic Proton acceptor. The active-site Proton donor is D132.

This sequence belongs to the HisA/HisF family.

It localises to the cytoplasm. It catalyses the reaction 1-(5-phospho-beta-D-ribosyl)-5-[(5-phospho-beta-D-ribosylamino)methylideneamino]imidazole-4-carboxamide = 5-[(5-phospho-1-deoxy-D-ribulos-1-ylimino)methylamino]-1-(5-phospho-beta-D-ribosyl)imidazole-4-carboxamide. Its pathway is amino-acid biosynthesis; L-histidine biosynthesis; L-histidine from 5-phospho-alpha-D-ribose 1-diphosphate: step 4/9. The sequence is that of 1-(5-phosphoribosyl)-5-[(5-phosphoribosylamino)methylideneamino] imidazole-4-carboxamide isomerase from Bacillus licheniformis (strain ATCC 14580 / DSM 13 / JCM 2505 / CCUG 7422 / NBRC 12200 / NCIMB 9375 / NCTC 10341 / NRRL NRS-1264 / Gibson 46).